A 147-amino-acid chain; its full sequence is Transcriptional regulator MraZ (147 aa).

SpoVT-AbrB domains are found at residues 5-47 and 76-123; these read QQLR…SEKE and TFEI…SKSK.

It belongs to the MraZ family. As to quaternary structure, forms oligomers.

It is found in the cytoplasm. The protein resides in the nucleoid. The polypeptide is Transcriptional regulator MraZ (Mycoplasmopsis synoviae (strain 53) (Mycoplasma synoviae)).